The sequence spans 163 residues: Large ribosomal subunit protein uL15 (163 aa).

Residues 27–37 (SGLGKTAGRGQ) are compositionally biased toward gly residues. The segment at 27-46 (SGLGKTAGRGQKGQKSRSGV) is disordered.

This sequence belongs to the universal ribosomal protein uL15 family. Part of the 50S ribosomal subunit.

Functionally, binds to the 23S rRNA. The sequence is that of Large ribosomal subunit protein uL15 from Zymomonas mobilis subsp. mobilis (strain ATCC 31821 / ZM4 / CP4).